The chain runs to 212 residues: Tubulin alpha chain (212 aa).

GTP-binding residues include Asn3 and Asn25. Glu51 is a catalytic residue.

This sequence belongs to the tubulin family. As to quaternary structure, dimer of alpha and beta chains. A typical microtubule is a hollow water-filled tube with an outer diameter of 25 nm and an inner diameter of 15 nM. Alpha-beta heterodimers associate head-to-tail to form protofilaments running lengthwise along the microtubule wall with the beta-tubulin subunit facing the microtubule plus end conferring a structural polarity. Microtubules usually have 13 protofilaments but different protofilament numbers can be found in some organisms and specialized cells. Mg(2+) serves as cofactor.

Its subcellular location is the cytoplasm. It is found in the cytoskeleton. It catalyses the reaction GTP + H2O = GDP + phosphate + H(+). Functionally, tubulin is the major constituent of microtubules, a cylinder consisting of laterally associated linear protofilaments composed of alpha- and beta-tubulin heterodimers. Microtubules grow by the addition of GTP-tubulin dimers to the microtubule end, where a stabilizing cap forms. Below the cap, tubulin dimers are in GDP-bound state, owing to GTPase activity of alpha-tubulin. The sequence is that of Tubulin alpha chain (TUB-A) from Pneumocystis carinii.